The primary structure comprises 660 residues: DNA mismatch repair protein MutL (660 aa).

This sequence belongs to the DNA mismatch repair MutL/HexB family.

In terms of biological role, this protein is involved in the repair of mismatches in DNA. It is required for dam-dependent methyl-directed DNA mismatch repair. May act as a 'molecular matchmaker', a protein that promotes the formation of a stable complex between two or more DNA-binding proteins in an ATP-dependent manner without itself being part of a final effector complex. The polypeptide is DNA mismatch repair protein MutL (Streptococcus equi subsp. zooepidemicus (strain H70)).